The sequence spans 144 residues: Large ribosomal subunit protein uL15 (144 aa).

Positions 1–57 are disordered; sequence MFLNTLRPGEGSKHAPKRVGRGIGSGLGKTGGRGHKGLKSRSGGSVKPGFEGGQMPL. The span at 21–31 shows a compositional bias: gly residues; the sequence is RGIGSGLGKTG.

It belongs to the universal ribosomal protein uL15 family. Part of the 50S ribosomal subunit.

Its function is as follows. Binds to the 23S rRNA. This Marinomonas sp. (strain MWYL1) protein is Large ribosomal subunit protein uL15.